Consider the following 60-residue polypeptide: Light-harvesting polypeptide B-885 alpha-2 chain (60 aa).

The Cytoplasmic portion of the chain corresponds to 1–16 (SAPAQWKLWLVMDPRT). Residues 17 to 37 (VMIGTAAWLGVLALLIHFLLL) form a helical membrane-spanning segment. An a bacteriochlorophyll-binding site is contributed by His33. The Periplasmic segment spans residues 38–60 (GTERFNWIDTGLKEQKATAAAQA).

It belongs to the antenna complex alpha subunit family. In terms of assembly, the core complex is formed by different alpha and beta chains, binding bacteriochlorophyll molecules, and arranged most probably in tetrameric structures disposed around the reaction center. The non-pigmented gamma chains may constitute additional components.

The protein resides in the cell inner membrane. Functionally, antenna complexes are light-harvesting systems, which transfer the excitation energy to the reaction centers. The sequence is that of Light-harvesting polypeptide B-885 alpha-2 chain from Rhodocyclus tenuis (Rhodospirillum tenue).